The chain runs to 488 residues: Neisserial heparin binding antigen (488 aa).

The first 17 residues, 1–17 (MFKRSVIAMACIFALSA), serve as a signal peptide directing secretion. The N-palmitoyl cysteine moiety is linked to residue Cys18. The S-diacylglycerol cysteine moiety is linked to residue Cys18. Positions 21 to 201 (GGGGSPDVKS…NPAPANGGSN (181 aa)) are disordered. The span at 43–53 (SEKETEAKEDA) shows a compositional bias: basic and acidic residues. Over residues 54 to 70 (PQAGSQGQGAPSAQGSQ) the composition is skewed to low complexity. Polar residues-rich tracts occupy residues 101–118 (DMPQNAAGTDSSTPNHTP) and 127–142 (MENQATDAGESSQPAN). Residues 160-183 (AGGQNAGNTAAQGANQAGNNQAAG) show a composition bias toward low complexity. The Arg-rich motif motif lies at 296–306 (RFRRSARSRRS). The tract at residues 306–488 (SLPAEMPLIP…GVFAGKKEQD (183 aa)) is C1 fragment.

This sequence belongs to the NHBA family. In terms of assembly, the C-terminal beta-barrel forms a monomer. In terms of processing, cleaved in vivo by the Neisserial phase-variable autotransporter/serine protease NalP to give 2 fragments. The N-terminus remains in the cell outer membrane while the 22 kDa C-terminus (beginning on Ser-293) is soluble; this soluble fragment is called C2. Cleaved in vitro by human lactoferrin (LTF, between Arg-305 and Ser-306), this fragment is called C1. Cleavage by NalP or lactoferrin does not alter killing of Neisseria by bactericidal antibodies in vitro. Recombinant and cell surface protein is cleaved by human saliva kallikrein (KLK1) between Ser-303 and Arg-304; in saliva kallikrein is more active on NHBA than lactoferrin. Human plasma kallikrein (KLKB1) cleaves in a similar manner to KLK1.

The protein resides in the cell outer membrane. The protein localises to the cell surface. It localises to the host mitochondrion. Its function is as follows. A major human immunogenic protein detected in patients recovering from meningitidis, where it induces bactericidal antibodies. Binds heparin and heparan sulfate proteoglycan in vitro via the Arg-rich motif. Heparin-binding to this protein protects bacteria against killing by bactericidal antibodies (serum killing). Binds to human cells via the Arg-rich region; binding may require the intact protein as protein fragments do not bind to human cells. Protein binding to human cells is abolished by treatment with heparinase III but not chondroitinase ABC. The bacteria binds a number of human extracellular sialyated and/or sulfated glycans via this protein, including chondroitin sulfate (KD=5.2 nM), heparin (KD=52 nM) and ganglioside GT3 (KD=210 nM). The recombinant protein binds DNA non-specifically. Functionally, plays a role in extracellular-DNA (eDNA) mediated biofilm formation. In strain MC58 eDNA stimulates biofilm formation. When NHBA is not processed by NalP there is an increase in positively charged, NHBA- and IgA-derived DNA-binding peptides on the cell surface, resulting in increased DNA-binding peptides and increased biofilm formation. In terms of biological role, [C2 fragment] Localizes to host mitochondria when applied to the apical side of human endothelial cell layers, where it induces production of reactive oxygen species which lead to increased permeability of host endothelial cells. The C1 fragment (which lacks the first 14 residues of C2) does not have this effect. It is not known if this occurs during Neisseria infections. The protein is Neisserial heparin binding antigen of Neisseria meningitidis serogroup B (strain ATCC BAA-335 / MC58).